Consider the following 465-residue polypeptide: Asparagine--tRNA ligase (465 aa).

The protein belongs to the class-II aminoacyl-tRNA synthetase family. Homodimer.

The protein localises to the cytoplasm. The catalysed reaction is tRNA(Asn) + L-asparagine + ATP = L-asparaginyl-tRNA(Asn) + AMP + diphosphate + H(+). This chain is Asparagine--tRNA ligase, found in Clostridium perfringens (strain SM101 / Type A).